The chain runs to 132 residues: NADH-quinone oxidoreductase subunit A 2 (132 aa).

A run of 3 helical transmembrane segments spans residues tryptophan 10–glycine 30, leucine 66–valine 86, and tryptophan 93–leucine 113.

Belongs to the complex I subunit 3 family. NDH-1 is composed of 13 different subunits. Subunits NuoA, H, J, K, L, M, N constitute the membrane sector of the complex.

It localises to the cell inner membrane. It carries out the reaction a quinone + NADH + 5 H(+)(in) = a quinol + NAD(+) + 4 H(+)(out). In terms of biological role, NDH-1 shuttles electrons from NADH, via FMN and iron-sulfur (Fe-S) centers, to quinones in the respiratory chain. The immediate electron acceptor for the enzyme in this species is believed to be ubiquinone. Couples the redox reaction to proton translocation (for every two electrons transferred, four hydrogen ions are translocated across the cytoplasmic membrane), and thus conserves the redox energy in a proton gradient. The sequence is that of NADH-quinone oxidoreductase subunit A 2 from Pseudomonas aeruginosa (strain UCBPP-PA14).